A 197-amino-acid chain; its full sequence is Peptide deformylase (197 aa).

Residues C106 and H148 each coordinate Fe cation. E149 is an active-site residue. Residue H152 coordinates Fe cation.

The protein belongs to the polypeptide deformylase family. Requires Fe(2+) as cofactor.

The enzyme catalyses N-terminal N-formyl-L-methionyl-[peptide] + H2O = N-terminal L-methionyl-[peptide] + formate. Functionally, removes the formyl group from the N-terminal Met of newly synthesized proteins. Requires at least a dipeptide for an efficient rate of reaction. N-terminal L-methionine is a prerequisite for activity but the enzyme has broad specificity at other positions. This Mycobacterium bovis (strain ATCC BAA-935 / AF2122/97) protein is Peptide deformylase.